Consider the following 454-residue polypeptide: F-box/WD repeat-containing protein 2 (454 aa).

The F-box domain occupies 54-101; the sequence is RDFLKLLPLELSFYLLKWLDPQTLLTCCLVSKQWNKVISACTEVWQTA. 4 WD repeats span residues 146 to 183, 185 to 221, 224 to 265, and 276 to 314; these read GHSARVYALYYKDGLLCTGSDDLSAKLWDVSTGQCVYG, QTHTCAAVKFDEQKLVTGSFDNTVACWEWSSGARTQH, GHTG…NTLT, and LQQCKVKSLLHSPGDYILLSADKYEIKIWPIGREINCKC. Lys-298 is modified (N6-acetyllysine).

As to quaternary structure, directly interacts with SKP1 and CUL1.

Its function is as follows. Substrate-recognition component of the SCF (SKP1-CUL1-F-box protein)-type E3 ubiquitin ligase complex. The sequence is that of F-box/WD repeat-containing protein 2 from Rattus norvegicus (Rat).